Here is a 335-residue protein sequence, read N- to C-terminus: Phosphatidylglycerol--prolipoprotein diacylglyceryl transferase (335 aa).

The next 3 membrane-spanning stretches (helical) occupy residues 31 to 51, 67 to 87, and 100 to 120; these read IYWY…TYSL, YIFL…LAIG, and LAIQ…FPLI. R163 is a binding site for a 1,2-diacyl-sn-glycero-3-phospho-(1'-sn-glycerol). 3 helical membrane passes run 213–233, 235–255, and 277–297; these read PLFL…YFGL, YIKQ…YGVT, and SLLL…APLL.

This sequence belongs to the Lgt family.

Its subcellular location is the cell membrane. The catalysed reaction is L-cysteinyl-[prolipoprotein] + a 1,2-diacyl-sn-glycero-3-phospho-(1'-sn-glycerol) = an S-1,2-diacyl-sn-glyceryl-L-cysteinyl-[prolipoprotein] + sn-glycerol 1-phosphate + H(+). The protein operates within protein modification; lipoprotein biosynthesis (diacylglyceryl transfer). Functionally, catalyzes the transfer of the diacylglyceryl group from phosphatidylglycerol to the sulfhydryl group of the N-terminal cysteine of a prolipoprotein, the first step in the formation of mature lipoproteins. The chain is Phosphatidylglycerol--prolipoprotein diacylglyceryl transferase from Ureaplasma parvum serovar 3 (strain ATCC 27815 / 27 / NCTC 11736).